We begin with the raw amino-acid sequence, 693 residues long: Nuclear autoantigenic sperm protein (693 aa).

The disordered stretch occupies residues 25-415; the sequence is GVHVEEEEGE…ENKSLPENEE (391 aa). Positions 29–40 are histone-binding; the sequence is EEEEGEKTEEES. Residues 29-53 are compositionally biased toward acidic residues; sequence EEEEGEKTEEESLVENNDNVDEEAR. Phosphothreonine is present on threonine 36. Serine 40 is subject to Phosphoserine. 2 stretches are compositionally biased toward basic and acidic residues: residues 54-74 and 82-99; these read EELR…KKTE and ETAK…REDM. Threonine 83 carries the phosphothreonine modification. Residues serine 89 and serine 102 each carry the phosphoserine modification. The tract at residues 124–157 is histone-binding; it reads EEAEGAAAPEGLNEAEVTSGKSEQEAADAEKGKS. The segment covering 128–139 has biased composition (low complexity); sequence GAAAPEGLNEAE. The span at 145–156 shows a compositional bias: basic and acidic residues; that stretch reads SEQEAADAEKGK. Lysine 156 is subject to N6-acetyllysine. Serine 157 is modified (phosphoserine). Basic and acidic residues predominate over residues 164-187; the sequence is QEEHKEQVEEKQGEVIVRIEKPTE. Lysine 199 carries the post-translational modification N6-acetyllysine. Phosphoserine occurs at positions 232, 304, 315, 327, and 356. Residues 307–322 are compositionally biased toward basic and acidic residues; that stretch reads RVTETKGGSELEEVRA. Phosphothreonine occurs at positions 369 and 382. The interval 374–418 is histone-binding; sequence EQMKEGEETEGSEEEDKENDKAEEETPNDSVLENKSLPENEEEEI. The segment covering 380 to 400 has biased composition (acidic residues); it reads EETEGSEEEDKENDKAEEETP. Residues serine 385, serine 403, and serine 409 each carry the phosphoserine modification. TPR repeat units lie at residues 448-481 and 490-523; these read AQAH…QEQY and AETH…IEKR. Residues 510 to 565 adopt a coiled-coil conformation; that stretch reads VAQFSKSIEVIEKRMAVLNEQMKEAEGSSTEYEKEIEELKELLPEIREKIEDAKES. At serine 568 the chain carries Phosphoserine. The tract at residues 583–693 is disordered; it reads SSTSGFTPSG…AGATVESTAC (111 aa). At threonine 589 the chain carries Phosphothreonine. Phosphoserine is present on residues serine 611 and serine 612. The Nuclear localization signal motif lies at 622–628; that stretch reads VRKKRKP. Residues 627–645 are compositionally biased toward basic and acidic residues; sequence KPEEESPRKDDAKKAKQEP. A Phosphoserine modification is found at serine 632. Residue lysine 642 forms a Glycyl lysine isopeptide (Lys-Gly) (interchain with G-Cter in SUMO1) linkage. Phosphoserine is present on residues serine 651, serine 657, and serine 662.

Belongs to the NASP family. In terms of assembly, binds to linker H1 histones. Interacts with histones H2A, H2B, H3 and H4. Interacts with histone H3.3. Interacts with histones H3 and H4; NASP is a histone chaperone that stabilizes and maintains a soluble pool of histone H3-H4 dimers. Interacts with ASF1A and ASF1B; the interaction is probably indirect and mediated by H3-H4. Also binds to HSP90 in the cytoplasm. This interaction stimulates binding of NASP to H1-6/H1T. In terms of tissue distribution, testis- and sperm-specific.

It is found in the cytoplasm. It localises to the nucleus. Component of the histone chaperone network. Binds and stabilizes histone H3-H4 not bound to chromatin to maintain a soluble reservoir and modulate degradation by chaperone-mediated autophagy. Required for DNA replication, normal cell cycle progression and cell proliferation. Forms a cytoplasmic complex with HSP90 and H1 linker histones and stimulates HSP90 ATPase activity. NASP and H1 histone are subsequently released from the complex and translocate to the nucleus where the histone is released for binding to DNA. The protein is Nuclear autoantigenic sperm protein (NASP) of Oryctolagus cuniculus (Rabbit).